Reading from the N-terminus, the 346-residue chain is Extracellular protease (346 aa).

Residues 1–21 (MMKATPIALLLAGVLASPLCA) form the signal peptide. His296 contributes to the Zn(2+) binding site. The active site involves Glu297. 2 residues coordinate Zn(2+): His300 and Asp309.

It belongs to the peptidase M35 family. Zn(2+) is required as a cofactor.

Heat-labile protease. The protein is Extracellular protease of Aeromonas hydrophila.